The chain runs to 437 residues: Eukaryotic peptide chain release factor subunit 1 (437 aa).

The NIKS motif; plays an important role in translational termination motif lies at 61–64 (NIKS).

It belongs to the eukaryotic release factor 1 family. As to quaternary structure, component of the eRF1-eRF3-GTP ternary complex, composed of ETF1/ERF1 and eRF3 (GSPT1/ERF3A or GSPT2/ERF3B) and GTP.

Its subcellular location is the cytoplasm. Its function is as follows. Component of the eRF1-eRF3-GTP ternary complex, a ternary complex that mediates translation termination in response to the termination codons. The eRF1-eRF3-GTP complex binds to a stop codon in the ribosomal A-site. ETF1/ERF1 is responsible for stop codon recognition and inducing hydrolysis of peptidyl-tRNA. Following GTP hydrolysis, eRF3 (GSPT1/ERF3A or GSPT2/ERF3B) dissociates, permitting ETF1/eRF1 to accommodate fully in the A-site, followed by hydrolysis of peptidyl-tRNA. This Xenopus laevis (African clawed frog) protein is Eukaryotic peptide chain release factor subunit 1 (etf1).